The primary structure comprises 207 residues: Large ribosomal subunit protein uL4 (207 aa).

Residues 49 to 78 (HAVKNRSAVSGGGRKPWRQKGTGRARQGSI) are disordered.

It belongs to the universal ribosomal protein uL4 family. As to quaternary structure, part of the 50S ribosomal subunit.

Functionally, one of the primary rRNA binding proteins, this protein initially binds near the 5'-end of the 23S rRNA. It is important during the early stages of 50S assembly. It makes multiple contacts with different domains of the 23S rRNA in the assembled 50S subunit and ribosome. In terms of biological role, forms part of the polypeptide exit tunnel. In Streptococcus equi subsp. zooepidemicus (strain H70), this protein is Large ribosomal subunit protein uL4.